A 643-amino-acid chain; its full sequence is Hypoxia up-regulated protein 1 (643 aa).

The signal sequence occupies residues 1 to 22; the sequence is MRPLVCVFTMFLLALLSSNTES. The tract at residues 565–643 is disordered; it reads LGNTISSLFG…EEEKSEPQEE (79 aa). Residues 590 to 610 show a composition bias toward acidic residues; that stretch reads VQEEDEVPTEPTKEEEQESAD. Basic and acidic residues-rich tracts occupy residues 611–621 and 630–643; these read AADKQKDKEKG and EGKK…PQEE.

It belongs to the heat shock protein 70 family.

It localises to the endoplasmic reticulum lumen. Has a pivotal role in cytoprotective cellular mechanisms triggered by oxygen deprivation. May play a role as a molecular chaperone and participate in protein folding. The chain is Hypoxia up-regulated protein 1 (hyou1) from Xenopus tropicalis (Western clawed frog).